A 140-amino-acid chain; its full sequence is Class I hydrophobin B (140 aa).

The signal sequence occupies residues 1–16 (MKFLAVVSLLAATALA). 4 disulfide bridges follow: cysteine 42/cysteine 113, cysteine 50/cysteine 107, cysteine 51/cysteine 88, and cysteine 114/cysteine 133. Residue asparagine 117 is glycosylated (N-linked (GlcNAc...) asparagine).

Belongs to the fungal hydrophobin family. Self-assembles to form functional amyloid fibrils called rodlets. Self-assembly into fibrillar rodlets occurs spontaneously at hydrophobic:hydrophilic interfaces and the rodlets further associate laterally to form amphipathic monolayers.

The protein localises to the secreted. It localises to the spore wall. In terms of biological role, aerial growth, conidiation, and dispersal of filamentous fungi in the environment rely upon a capability of their secreting small amphipathic proteins called hydrophobins (HPBs) with low sequence identity. Class I can self-assemble into an outermost layer of rodlet bundles on aerial cell surfaces, conferring cellular hydrophobicity that supports fungal growth, development and dispersal; whereas Class II form highly ordered films at water-air interfaces through intermolecular interactions but contribute nothing to the rodlet structure. RodB is a class I hydrophobin that, unlike rodA, is not required for rodlet formation. This is Class I hydrophobin B from Aspergillus fumigatus (strain ATCC MYA-4609 / CBS 101355 / FGSC A1100 / Af293) (Neosartorya fumigata).